The primary structure comprises 1271 residues: Zinc finger transcription factor Trps1 (1271 aa).

2 disordered regions span residues 1–76 and 124–155; these read MVRK…DSAS and SPIK…DMSP. The segment covering 34–49 has biased composition (polar residues); that stretch reads SKEISTDPMQENSEQS. Over residues 54 to 65 the composition is skewed to basic and acidic residues; that stretch reads HNSDDHSFHDQE. The segment covering 66 to 76 has biased composition (polar residues); that stretch reads PSSSINKDSAS. The C2H2-type 1; atypical zinc finger occupies 217 to 242; sequence FKCNICGYGYYGNDPTDLIKHFRKYH. The segment at 328–353 adopts a C2H2-type 2; atypical zinc-finger fold; it reads FRCKFCNFTYLAKSATELEQHFLKTH. The segment at 353–387 is disordered; the sequence is HPNKMKMSSDSGKPSEKSTNKSSPIPRSCEPGDLG. A C2H2-type 3; atypical zinc finger spans residues 426–451; it reads YWCKFCSFSCESSSNSKLLEHHSKQH. The C2H2-type 4; atypical zinc finger occupies 513 to 543; sequence YNCQFCDFRYSKSHGPEVILVGPLLRHYQQH. 3 C2H2-type zinc fingers span residues 604–627, 656–679, and 682–705; these read HQCD…ENAH, HSCT…RRVH, and YKCR…NSAH. The disordered stretch occupies residues 843 to 877; sequence GVTAGASGEKSGQHTPQYPTAGDSKSKDESQSLLR. The GATA-type zinc finger occupies 886 to 910; that stretch reads CANCLTTKTSLWRKNANGGYVCNAC. Disordered regions lie at residues 938–987, 1031–1064, and 1154–1196; these read RTRK…RENQ, SPQE…YMRP, and LDLA…EKSD. The segment covering 972 to 985 has biased composition (basic and acidic residues); it reads IRSEDHSMEGHQRE. Residues 1031–1049 show a composition bias toward low complexity; sequence SPQESSGEPGNSSSVSDGK. Basic and acidic residues-rich tracts occupy residues 1050–1062 and 1170–1196; these read GSSE…EKYM and DSKE…EKSD. Residues 1153–1271 form a transcriptional repressor domain region; the sequence is PLDLAMKHSR…QAEKNGKNKD (119 aa). Glycyl lysine isopeptide (Lys-Gly) (interchain with G-Cter in SUMO) cross-links involve residues Lys1182 and Lys1191. 2 C2H2-type zinc fingers span residues 1205 to 1227 and 1233 to 1257; these read TKCV…MSCH and FQCS…RGLH.

In terms of assembly, binds specifically to GATA sequences. Post-translationally, sumoylated. Sumoylation in the repressor domain inhibits the transcription repression activity. Sumoylation on Lys-1191 is the major site. Appears to be sumoylated on multiple sites.

The protein localises to the nucleus. Transcriptional repressor. Represses expression of GATA-regulated genes at selected sites and stages in vertebrate development. This is Zinc finger transcription factor Trps1 (trps1) from Xenopus laevis (African clawed frog).